A 575-amino-acid chain; its full sequence is U3 small nucleolar RNA-associated protein 9 (575 aa).

Composition is skewed to basic and acidic residues over residues 340-355 (NEKNNADEADQKKLEE) and 364-375 (VQHEKKETETKI). The tract at residues 340–375 (NEKNNADEADQKKLEEKEEEAQPEVQHEKKETETKI) is disordered. Phosphoserine is present on residues serine 547 and serine 564.

In terms of assembly, interacts with snoRNA U3. Interacts with MPP10. Component of the ribosomal small subunit (SSU) processome composed of at least 40 protein subunits and snoRNA U3. In the absence of snoRNA3, forms a complex with other t-UTPs. This complex can associate with pre-18S ribosomal RNAs.

It localises to the nucleus. Its subcellular location is the nucleolus. Functionally, involved in nucleolar processing of pre-18S ribosomal RNA. Required for optimal pre-ribosomal RNA transcription by RNA polymerase I together with a subset of U3 proteins required for transcription (t-UTPs). The polypeptide is U3 small nucleolar RNA-associated protein 9 (UTP9) (Saccharomyces cerevisiae (strain ATCC 204508 / S288c) (Baker's yeast)).